A 434-amino-acid polypeptide reads, in one-letter code: MGETKVIRIEDVSKFVGQTVKIGVWLRQKRGSGKIAFLQLRDGTGFMQGVVSVGDVDEATFKLAEHLKQESSFYVTGEIHQDSRSEFGFEMAVSDIEIVGESEDYPITPKEHGTDFLFDERHLYLRHQKPFATMKIRDEIIRAIYDFFHKDGFLKLDSPIITDSAPEGTTELFPVKYFDKDAYLSQTGQLYAEAGAMAFGKVYDFGPTFRAEKSSTRRHLTEFWMIDAEMAWMHQEDSLKVQERFIAYLIERVVDNCQVELKMLGRDVEKLRAYTKLPYPRISYDDAVKLLQDNDFKIEWGVDFGSPEETFLAKRFNSPFFIVNFPKAIKAFYMKRPPSRDDVVISADMLAPEGYGEIIGGSERDTDYDYLKQQIISQHLDLSEYSWYLDLRKYGTVPHSGFGLGLERLIRFIAGEDHIRETIPFPRTLNRLHP.

It belongs to the class-II aminoacyl-tRNA synthetase family. Homodimer.

It is found in the cytoplasm. The enzyme catalyses tRNA(Asn) + L-asparagine + ATP = L-asparaginyl-tRNA(Asn) + AMP + diphosphate + H(+). The sequence is that of Asparagine--tRNA ligase from Oenococcus oeni (strain ATCC BAA-331 / PSU-1).